A 441-amino-acid polypeptide reads, in one-letter code: GPI mannosyltransferase 2 (441 aa).

10 helical membrane-spanning segments follow: residues 4–24 (MTVLSPSAGSQSACSLGLILV), 35–55 (ILFGLWKALIFLVIVICPGLG), 115–135 (LLALLASVLVLYRLSVNIFGG), 143–163 (LCFLSAALHIISPAGAFLSAP), 165–185 (GEALFSLLNISGLYLYSSSVL), 199–223 (LLAAAVLISAATAVRSNGILGGVLF), 249–269 (VIVLGGCVIALGMAVPQYIAF), 306–326 (YWVVPNIPLFLLAMPILALLL), 361–381 (LAIIQALLAVLAFTSYHVQII), and 418–438 (VAVQAIMIYGLIHAVLFGSFL).

It belongs to the PIGV family.

It localises to the endoplasmic reticulum membrane. It functions in the pathway glycolipid biosynthesis; glycosylphosphatidylinositol-anchor biosynthesis. Mannosyltransferase involved in glycosylphosphatidylinositol-anchor biosynthesis. Transfers the second mannose to the glycosylphosphatidylinositol during GPI precursor assembly. The protein is GPI mannosyltransferase 2 (gpi18) of Aspergillus fumigatus (strain ATCC MYA-4609 / CBS 101355 / FGSC A1100 / Af293) (Neosartorya fumigata).